We begin with the raw amino-acid sequence, 1169 residues long: Protein MBD-R2 (1169 aa).

A THAP-type zinc finger spans residues 5 to 59; the sequence is CCVANCPSTSRLLEHNGVTYHSFPLDPIIRAIWIKNSRISLERQITKSVLVCSRH. 3 disordered regions span residues 99–122, 140–211, and 347–394; these read RALQ…STND, SAER…KYSN, and AEEG…CAPQ. A compositionally biased stretch (polar residues) spans 107–122; that stretch reads EGTTETPGNAQSSTND. Basic and acidic residues predominate over residues 140-160; it reads SAERKATEEGKTGKAADDVKN. Residues 190 to 202 are compositionally biased toward low complexity; it reads PAPGSASSSNSPL. Over residues 353 to 363 the composition is skewed to polar residues; that stretch reads KSPTPVGTPVS. In terms of domain architecture, MBD spans 445–514; the sequence is KPTVIVQDWR…DVYDFSIHRR (70 aa). The segment at 527 to 565 is disordered; it reads GYNPQPPPKPRPMDVSMNSTLDQSITSQHSLPSTPMPVK. The span at 542 to 559 shows a compositional bias: polar residues; sequence SMNSTLDQSITSQHSLPS. A C2H2-type zinc finger spans residues 640–665; that stretch reads YVCPREDCAKTYRKEDFLLIHIRHYH. The interval 714 to 890 is disordered; that stretch reads QDLQQSRSFK…INAALAPPPA (177 aa). Low complexity predominate over residues 726-742; that stretch reads SVSATATSSTPSDITPT. Positions 774–784 are enriched in polar residues; the sequence is PTQSFNPSLSR. Positions 798–810 are enriched in basic residues; the sequence is SGSRKSNRQRSQR. Composition is skewed to polar residues over residues 853-862 and 869-881; these read AATTPISSID and SVST…QTDI.

In terms of assembly, component of the non-specific lethal (NLS) histone acetyltransferase complex at least composed of mof, nls1, dgt1/NSL2, Rcd1/NSL3, Rcd5/MCRS2, MBD-R2 and wds.

It localises to the nucleus. Its subcellular location is the chromosome. Its function is as follows. Component of the non-specific lethal (NLS) complex, a multiprotein complex that promotes expression of housekeeping genes on X chromosome and autosomes. The sequence is that of Protein MBD-R2 from Drosophila melanogaster (Fruit fly).